Consider the following 403-residue polypeptide: Putative F-box/LRR-repeat protein At5g38386 (403 aa).

The 47-residue stretch at 1–47 (MDHLSNLPDELLCHIMSFLTTKEAALISVLSKRWRNLIAFVPNLDIF) folds into the F-box domain. 6 LRR repeats span residues 64–91 (IRQLFMDFVDRVLALQGNSPLKKFSLCC), 93–119 (GGSYSDRVDCWIQNVMVRGVSELDLSM), 131–156 (VFENKKLNFEIFLRALPALEELVMNH), 175–203 (LKTLTIKCIVCLHTKSFDTPSLAYLSYSD), 243–274 (YLYFSRDTLEVLSLCCESMPVFKNLKSLSIKS), and 275–300 (VESRGWQAMPVLLRNCPHLETLVLEA).

The protein is Putative F-box/LRR-repeat protein At5g38386 of Arabidopsis thaliana (Mouse-ear cress).